A 709-amino-acid chain; its full sequence is Phosphoribosylformylglycinamidine synthase subunit PurL (709 aa).

Residue histidine 36 is part of the active site. Residues tyrosine 39 and lysine 80 each coordinate ATP. Residue glutamate 82 participates in Mg(2+) binding. Substrate-binding positions include 83 to 86 (SHNH) and arginine 105. Histidine 84 (proton acceptor) is an active-site residue. Aspartate 106 is a Mg(2+) binding site. Glutamine 226 lines the substrate pocket. Aspartate 252 is a binding site for Mg(2+). Position 294-296 (294-296 (ETQ)) interacts with substrate. The ATP site is built by aspartate 470 and glycine 507. Serine 510 is a substrate binding site.

It belongs to the FGAMS family. As to quaternary structure, monomer. Part of the FGAM synthase complex composed of 1 PurL, 1 PurQ and 2 PurS subunits.

It is found in the cytoplasm. The catalysed reaction is N(2)-formyl-N(1)-(5-phospho-beta-D-ribosyl)glycinamide + L-glutamine + ATP + H2O = 2-formamido-N(1)-(5-O-phospho-beta-D-ribosyl)acetamidine + L-glutamate + ADP + phosphate + H(+). The protein operates within purine metabolism; IMP biosynthesis via de novo pathway; 5-amino-1-(5-phospho-D-ribosyl)imidazole from N(2)-formyl-N(1)-(5-phospho-D-ribosyl)glycinamide: step 1/2. Its function is as follows. Part of the phosphoribosylformylglycinamidine synthase complex involved in the purines biosynthetic pathway. Catalyzes the ATP-dependent conversion of formylglycinamide ribonucleotide (FGAR) and glutamine to yield formylglycinamidine ribonucleotide (FGAM) and glutamate. The FGAM synthase complex is composed of three subunits. PurQ produces an ammonia molecule by converting glutamine to glutamate. PurL transfers the ammonia molecule to FGAR to form FGAM in an ATP-dependent manner. PurS interacts with PurQ and PurL and is thought to assist in the transfer of the ammonia molecule from PurQ to PurL. The protein is Phosphoribosylformylglycinamidine synthase subunit PurL of Saccharolobus islandicus (strain Y.N.15.51 / Yellowstone #2) (Sulfolobus islandicus).